The chain runs to 935 residues: Protein translocase subunit SecA (935 aa).

ATP is bound by residues Q86, 104–108 (GEGKT), and D494. Residues 879 to 935 (EQAATARAQQHSSAAVAAPEQGATQRGAFGQRVSAADDAAPANRAERRAQKKPTKRH) are disordered.

Belongs to the SecA family. As to quaternary structure, monomer and homodimer. Part of the essential Sec protein translocation apparatus which comprises SecA, SecYEG and auxiliary proteins SecDF. Other proteins may also be involved.

It localises to the cell membrane. The protein resides in the cytoplasm. The catalysed reaction is ATP + H2O + cellular proteinSide 1 = ADP + phosphate + cellular proteinSide 2.. Part of the Sec protein translocase complex. Interacts with the SecYEG preprotein conducting channel. Has a central role in coupling the hydrolysis of ATP to the transfer of proteins into and across the cell membrane, serving as an ATP-driven molecular motor driving the stepwise translocation of polypeptide chains across the membrane. The chain is Protein translocase subunit SecA from Leifsonia xyli subsp. xyli (strain CTCB07).